Here is a 527-residue protein sequence, read N- to C-terminus: MSLNPHQIFNESGIQERGENARLSSFVGAIAVGDLVKSTLGPKGMDKILQSNSSGDIVVTNDGATILKSIALDNAAAKVLVNISKVQDDEVGDGTTSVCVFAAELLRQAEIMVNAKIHPQVIIDGYRIATKTAIDALRASSIDNSSDPAKFRSDLENIARTTLSSKILSQNKNHFAQLAVDAVLRLKGSTNLDNIQIIKILGGKLDDSFLDEGFILNKTIGVNCPKVMENANILIANTAMDTDKVKVFGARVRVDTTGKLAELERAEREKMKAKVEKIKSHNINCFINRQLIYNWPEQLFADAGIMSIEHADFDGIERLSLVTGGEIASTFDHPELVKLGHCKKIEEIIIGEDKMIKFSGVEAGEACTIVLRGATHQLLDESERAIHDALAVLSQTVAESRVTLGGGCAEMLMAKAVEEAATHEPGKKAVAVSAFAKALSQLPTILADNAGFDSSELVAQLKAAHYDGNDTMGLDMDEGEIADMRAKGILEALKLKQAVVSSGSEGAQLLLRVDTILKAAPRPRERM.

This sequence belongs to the TCP-1 chaperonin family. Heterooligomeric complex of about 850 to 900 kDa that forms two stacked rings, 12 to 16 nm in diameter.

Its subcellular location is the cytoplasm. Functionally, molecular chaperone; assists the folding of proteins upon ATP hydrolysis. Known to play a role, in vitro, in the folding of actin and tubulin. In Schizosaccharomyces pombe (strain 972 / ATCC 24843) (Fission yeast), this protein is Probable T-complex protein 1 subunit beta (cct2).